A 391-amino-acid polypeptide reads, in one-letter code: Formate-dependent phosphoribosylglycinamide formyltransferase (391 aa).

Residues 20–21 and glutamate 80 each bind N(1)-(5-phospho-beta-D-ribosyl)glycinamide; that span reads EL. ATP contacts are provided by residues arginine 112, lysine 153, 158-163, 193-196, and glutamate 201; these read SSGKGQ and EGFV. Residues 117–306 form the ATP-grasp domain; that stretch reads RLAAEELQLP…EFALHVRAFT (190 aa). Positions 265 and 277 each coordinate Mg(2+). Residues aspartate 284, lysine 354, and 361–362 each bind N(1)-(5-phospho-beta-D-ribosyl)glycinamide; that span reads RR.

This sequence belongs to the PurK/PurT family. In terms of assembly, homodimer.

The enzyme catalyses N(1)-(5-phospho-beta-D-ribosyl)glycinamide + formate + ATP = N(2)-formyl-N(1)-(5-phospho-beta-D-ribosyl)glycinamide + ADP + phosphate + H(+). Its pathway is purine metabolism; IMP biosynthesis via de novo pathway; N(2)-formyl-N(1)-(5-phospho-D-ribosyl)glycinamide from N(1)-(5-phospho-D-ribosyl)glycinamide (formate route): step 1/1. Its function is as follows. Involved in the de novo purine biosynthesis. Catalyzes the transfer of formate to 5-phospho-ribosyl-glycinamide (GAR), producing 5-phospho-ribosyl-N-formylglycinamide (FGAR). Formate is provided by PurU via hydrolysis of 10-formyl-tetrahydrofolate. This Aliivibrio fischeri (strain ATCC 700601 / ES114) (Vibrio fischeri) protein is Formate-dependent phosphoribosylglycinamide formyltransferase.